The sequence spans 223 residues: Killer cell lectin-like receptor subfamily B member 1B allele A (223 aa).

Residues 1–43 (MDSTTLVYADLNLARIQEPKHDSPPSLSPDTCRCPRWHRLALK) lie on the Cytoplasmic side of the membrane. Residues 6–11 (LVYADL) carry the ITIM motif motif. An LCK-binding motif motif is present at residues 32-35 (CRCP). A helical; Signal-anchor for type II membrane protein transmembrane segment spans residues 44–63 (FGCAGLILLVLVVIGLCVLV). The Extracellular portion of the chain corresponds to 64–223 (LSVQKSSVQK…LNHETPSNDS (160 aa)). Positions 93-212 (ECPQDWLSHR…STDNRWICQK (120 aa)) constitute a C-type lectin domain. Disulfide bonds link C122–C210 and C189–C202.

In terms of assembly, homodimer; disulfide-linked. Interacts with tyrosine kinase LCK. Binds PTPN6/SHP-1 in a phosphorylation-dependent manner. Expressed in NK cells and a subset of T-cells.

It localises to the membrane. Its function is as follows. Receptor for CLEC2D/OCIL. Ligand-binding contributes to inhibition of cytotoxic natural killer (NK) cells. May mediate MHC class I-independent 'missing-self' recognition of allografts, tumor cells and virus-infected cells. This Mus musculus (Mouse) protein is Killer cell lectin-like receptor subfamily B member 1B allele A (Klrb1b).